We begin with the raw amino-acid sequence, 468 residues long: Argininosuccinate lyase (468 aa).

Belongs to the lyase 1 family. Argininosuccinate lyase subfamily.

Its subcellular location is the cytoplasm. The enzyme catalyses 2-(N(omega)-L-arginino)succinate = fumarate + L-arginine. The protein operates within amino-acid biosynthesis; L-arginine biosynthesis; L-arginine from L-ornithine and carbamoyl phosphate: step 3/3. This Paraburkholderia xenovorans (strain LB400) protein is Argininosuccinate lyase.